The chain runs to 83 residues: Cardiotoxin 7'' (83 aa).

An N-terminal signal peptide occupies residues 1–21 (MKTLLLTLVVVTIVCLDLGYT). 4 disulfide bridges follow: cysteine 24-cysteine 43, cysteine 36-cysteine 61, cysteine 65-cysteine 76, and cysteine 77-cysteine 82.

Belongs to the three-finger toxin family. Short-chain subfamily. Orphan group XV sub-subfamily. In terms of tissue distribution, expressed by the venom gland.

Its subcellular location is the secreted. The protein resides in the target cell membrane. Has low cytotoxic activity. This Naja atra (Chinese cobra) protein is Cardiotoxin 7''.